A 428-amino-acid polypeptide reads, in one-letter code: Trigger factor (428 aa).

Residues 163 to 248 (GDMVIIDYKG…IHEIKEKEVP (86 aa)) form the PPIase FKBP-type domain.

This sequence belongs to the FKBP-type PPIase family. Tig subfamily.

It is found in the cytoplasm. It carries out the reaction [protein]-peptidylproline (omega=180) = [protein]-peptidylproline (omega=0). In terms of biological role, involved in protein export. Acts as a chaperone by maintaining the newly synthesized protein in an open conformation. Functions as a peptidyl-prolyl cis-trans isomerase. In Alkaliphilus oremlandii (strain OhILAs) (Clostridium oremlandii (strain OhILAs)), this protein is Trigger factor.